The following is a 400-amino-acid chain: S-adenosylmethionine synthase (400 aa).

Residue 136–141 (GQGSVD) participates in ATP binding.

This sequence belongs to the AdoMet synthase 2 family. It depends on Mg(2+) as a cofactor.

It carries out the reaction L-methionine + ATP + H2O = S-adenosyl-L-methionine + phosphate + diphosphate. It participates in amino-acid biosynthesis; S-adenosyl-L-methionine biosynthesis; S-adenosyl-L-methionine from L-methionine: step 1/1. Its function is as follows. Catalyzes the formation of S-adenosylmethionine from methionine and ATP. The chain is S-adenosylmethionine synthase (mat) from Thermoplasma acidophilum (strain ATCC 25905 / DSM 1728 / JCM 9062 / NBRC 15155 / AMRC-C165).